A 439-amino-acid polypeptide reads, in one-letter code: ATP-dependent RNA helicase RhlB (439 aa).

Residues 9–37 carry the Q motif motif; the sequence is QKFADLPLHPEVKQALAENGFEFCTPIQA. The Helicase ATP-binding domain maps to 40–219; the sequence is LPVLLQSKDI…YDHMNDPVKV (180 aa). 53-60 is a binding site for ATP; that stretch reads AQTGTGKT. A DEAD box motif is present at residues 165–168; that stretch reads DEAD. A Helicase C-terminal domain is found at 243–390; sequence KMRLLLTLIE…VSNYDRDALL (148 aa). The interval 395-439 is disordered; it reads SPVKIHRKHPAGARNLRERSGAGRTPGAHRSGGRPPRHDRTRRQP. Basic residues predominate over residues 425-439; sequence SGGRPPRHDRTRRQP.

Belongs to the DEAD box helicase family. RhlB subfamily. Component of the RNA degradosome, which is a multiprotein complex involved in RNA processing and mRNA degradation.

The protein localises to the cytoplasm. The catalysed reaction is ATP + H2O = ADP + phosphate + H(+). Its function is as follows. DEAD-box RNA helicase involved in RNA degradation. Has RNA-dependent ATPase activity and unwinds double-stranded RNA. The sequence is that of ATP-dependent RNA helicase RhlB from Shewanella oneidensis (strain ATCC 700550 / JCM 31522 / CIP 106686 / LMG 19005 / NCIMB 14063 / MR-1).